The chain runs to 876 residues: Alanine--tRNA ligase (876 aa).

Residue K74 is modified to N6-acetyllysine. Positions 564, 568, 666, and 670 each coordinate Zn(2+).

The protein belongs to the class-II aminoacyl-tRNA synthetase family. In terms of assembly, homotetramer. It depends on Zn(2+) as a cofactor.

It is found in the cytoplasm. It catalyses the reaction tRNA(Ala) + L-alanine + ATP = L-alanyl-tRNA(Ala) + AMP + diphosphate. In terms of biological role, catalyzes the attachment of alanine to tRNA(Ala) in a two-step reaction: alanine is first activated by ATP to form Ala-AMP and then transferred to the acceptor end of tRNA(Ala). Also edits incorrectly charged Ser-tRNA(Ala) and Gly-tRNA(Ala) via its editing domain. The sequence is that of Alanine--tRNA ligase from Escherichia coli (strain SMS-3-5 / SECEC).